The following is a 241-amino-acid chain: Triosephosphate isomerase (241 aa).

Position 9 to 11 (Asn9 to Lys11) interacts with substrate. The Electrophile role is filled by His96. Glu165 (proton acceptor) is an active-site residue. Residues Gly171, Ser204, and Gly225–Gly226 each bind substrate.

This sequence belongs to the triosephosphate isomerase family. As to quaternary structure, homodimer.

It localises to the cytoplasm. It catalyses the reaction D-glyceraldehyde 3-phosphate = dihydroxyacetone phosphate. Its pathway is carbohydrate biosynthesis; gluconeogenesis. The protein operates within carbohydrate degradation; glycolysis; D-glyceraldehyde 3-phosphate from glycerone phosphate: step 1/1. Its function is as follows. Involved in the gluconeogenesis. Catalyzes stereospecifically the conversion of dihydroxyacetone phosphate (DHAP) to D-glyceraldehyde-3-phosphate (G3P). The sequence is that of Triosephosphate isomerase from Picosynechococcus sp. (strain ATCC 27264 / PCC 7002 / PR-6) (Agmenellum quadruplicatum).